Consider the following 371-residue polypeptide: 4-hydroxy-3-methylbut-2-en-1-yl diphosphate synthase (flavodoxin) (371 aa).

[4Fe-4S] cluster-binding residues include cysteine 270, cysteine 273, cysteine 305, and glutamate 312.

Belongs to the IspG family. [4Fe-4S] cluster is required as a cofactor.

It catalyses the reaction (2E)-4-hydroxy-3-methylbut-2-enyl diphosphate + oxidized [flavodoxin] + H2O + 2 H(+) = 2-C-methyl-D-erythritol 2,4-cyclic diphosphate + reduced [flavodoxin]. It participates in isoprenoid biosynthesis; isopentenyl diphosphate biosynthesis via DXP pathway; isopentenyl diphosphate from 1-deoxy-D-xylulose 5-phosphate: step 5/6. Converts 2C-methyl-D-erythritol 2,4-cyclodiphosphate (ME-2,4cPP) into 1-hydroxy-2-methyl-2-(E)-butenyl 4-diphosphate. The polypeptide is 4-hydroxy-3-methylbut-2-en-1-yl diphosphate synthase (flavodoxin) (Shewanella frigidimarina (strain NCIMB 400)).